Reading from the N-terminus, the 263-residue chain is Neuferricin (263 aa).

Positions Met-1 to Ala-22 are cleaved as a signal peptide. The Cytochrome b5 heme-binding domain occupies Ile-35–Val-134. Residues Val-220–Tyr-249 are disordered. Basic and acidic residues predominate over residues Asp-231–Leu-241.

The protein belongs to the cytochrome b5 family. MAPR subfamily. In terms of tissue distribution, expressed in various tissues including brain, heart, adrenal gland, and kidney. In the brain, mainly expressed in pyramidal cells around the CA3 region of Ammon horn in hippocampus. Present in brain (at protein level).

Its subcellular location is the secreted. In terms of biological role, heme-binding protein which promotes neuronal but not astrocyte differentiation. The polypeptide is Neuferricin (Mus musculus (Mouse)).